Here is a 103-residue protein sequence, read N- to C-terminus: Small ribosomal subunit protein uS10 (103 aa).

This sequence belongs to the universal ribosomal protein uS10 family. In terms of assembly, part of the 30S ribosomal subunit.

Its function is as follows. Involved in the binding of tRNA to the ribosomes. In Stutzerimonas stutzeri (strain A1501) (Pseudomonas stutzeri), this protein is Small ribosomal subunit protein uS10.